A 218-amino-acid chain; its full sequence is DNA-binding protein HU 2 (218 aa).

Positions 1–91 (MNKAQLVEAI…QGFKDLVSGS (91 aa)) are bacterial histone-like domain. The disordered stretch occupies residues 101-218 (VKKAPKGSLS…TAKKATARKK (118 aa)). The interval 118-218 (KAAGKKAAAK…TAKKATARKK (101 aa)) is degenerate repeats region. Positions 127–161 (KKATGAAKKTTGAAKKTSAAAKKTTAKKTTGAAKT) are enriched in low complexity. A compositionally biased stretch (basic residues) spans 162-172 (TAKKTTAKKSA). The segment covering 173-182 (AKTTTAAAKK) has biased composition (low complexity). Over residues 183–218 (TAAKKAPAKKATAKKAPAKKSTARKTTAKKATARKK) the composition is skewed to basic residues.

Belongs to the bacterial histone-like protein family. Long actinobacterial subfamily. In terms of assembly, homodimer.

It is found in the cytoplasm. Its subcellular location is the nucleoid. Its function is as follows. Histone-like DNA-binding protein which is capable of wrapping DNA to stabilize it, and thus to prevent its denaturation under extreme environmental conditions. This is DNA-binding protein HU 2 (hup2) from Streptomyces coelicolor (strain ATCC BAA-471 / A3(2) / M145).